Consider the following 73-residue polypeptide: Antimicrobial peptide 143 (73 aa).

The signal sequence occupies residues Met-1–Ala-22. A Lysine amide modification is found at Lys-38. Positions Glu-44 to Tyr-73 are excised as a propeptide.

It belongs to the non-disulfide-bridged peptide (NDBP) superfamily. Short antimicrobial peptide (group 4) family. As to expression, expressed by the venom gland.

The protein localises to the secreted. The protein resides in the target cell membrane. Cationic host defense peptide that have antibacterial activity by breaking membranes. Is more effective on Gram-positive than on Gram-negative bacteria. This Lychas mucronatus (Chinese swimming scorpion) protein is Antimicrobial peptide 143.